A 206-amino-acid polypeptide reads, in one-letter code: Holliday junction branch migration complex subunit RuvA (206 aa).

The interval 1–64 (MIGKLKGVLD…EDMIRLYGFR (64 aa)) is domain I. The tract at residues 65–144 (TVLEREWFRL…AFAGEAAGAI (80 aa)) is domain II. The interval 145-154 (GLKQDLGEGV) is flexible linker. The interval 154–206 (VAPAPVSDAVSALANLGYSRDIAANAVAAALKSAGEGADTGTLIRLGLKELAR) is domain III.

The protein belongs to the RuvA family. Homotetramer. Forms an RuvA(8)-RuvB(12)-Holliday junction (HJ) complex. HJ DNA is sandwiched between 2 RuvA tetramers; dsDNA enters through RuvA and exits via RuvB. An RuvB hexamer assembles on each DNA strand where it exits the tetramer. Each RuvB hexamer is contacted by two RuvA subunits (via domain III) on 2 adjacent RuvB subunits; this complex drives branch migration. In the full resolvosome a probable DNA-RuvA(4)-RuvB(12)-RuvC(2) complex forms which resolves the HJ.

Its subcellular location is the cytoplasm. In terms of biological role, the RuvA-RuvB-RuvC complex processes Holliday junction (HJ) DNA during genetic recombination and DNA repair, while the RuvA-RuvB complex plays an important role in the rescue of blocked DNA replication forks via replication fork reversal (RFR). RuvA specifically binds to HJ cruciform DNA, conferring on it an open structure. The RuvB hexamer acts as an ATP-dependent pump, pulling dsDNA into and through the RuvAB complex. HJ branch migration allows RuvC to scan DNA until it finds its consensus sequence, where it cleaves and resolves the cruciform DNA. The protein is Holliday junction branch migration complex subunit RuvA of Chelativorans sp. (strain BNC1).